Here is a 157-residue protein sequence, read N- to C-terminus: Small ribosomal subunit protein uS7 (157 aa).

This sequence belongs to the universal ribosomal protein uS7 family. Part of the 30S ribosomal subunit. Contacts proteins S9 and S11.

In terms of biological role, one of the primary rRNA binding proteins, it binds directly to 16S rRNA where it nucleates assembly of the head domain of the 30S subunit. Is located at the subunit interface close to the decoding center, probably blocks exit of the E-site tRNA. The sequence is that of Small ribosomal subunit protein uS7 from Chlamydia abortus (strain DSM 27085 / S26/3) (Chlamydophila abortus).